The primary structure comprises 733 residues: Photosystem I P700 chlorophyll a apoprotein A2 (733 aa).

8 helical membrane-spanning segments follow: residues 46–69 (IFASHFGHLAVIFLWTAGNLFHVA), 134–157 (LYLGSVGLLLLSCALLFAGWLHLQ), 174–198 (LNHHLSGLMGVSSLAWTGHLVHVAL), 272–290 (IAHHQLAIAFVFIIAGHMY), 329–352 (LHIQLGLALACLGVATSLTAQHMY), 368–394 (AALYTHHQYIAGFLMVGAFAHGAIFFV), 416–438 (AIISHLSWASLFLGFHVLGLYIH), and 516–534 (FLVHHAIALGLHVTTLILV). [4Fe-4S] cluster contacts are provided by Cys558 and Cys567. Helical transmembrane passes span 574-595 (AFYLAMFWMLNTIGWVTFYWHW) and 642-664 (LSVWAWMFLFGHLIWATGFMFLI). 3 residues coordinate chlorophyll a: His653, Met661, and Tyr669. Trp670 contributes to the phylloquinone binding site. The helical transmembrane segment at 706–726 (LVGLVHFAVGYILTYAAFVIA) threads the bilayer.

It belongs to the PsaA/PsaB family. The PsaA/B heterodimer binds the P700 chlorophyll special pair and subsequent electron acceptors. PSI consists of a core antenna complex that captures photons, and an electron transfer chain that converts photonic excitation into a charge separation. The eukaryotic PSI reaction center is composed of at least 11 subunits. The cofactor is P700 is a chlorophyll a/chlorophyll a' dimer, A0 is one or more chlorophyll a, A1 is one or both phylloquinones and FX is a shared 4Fe-4S iron-sulfur center..

It is found in the plastid. The protein resides in the chloroplast thylakoid membrane. The enzyme catalyses reduced [plastocyanin] + hnu + oxidized [2Fe-2S]-[ferredoxin] = oxidized [plastocyanin] + reduced [2Fe-2S]-[ferredoxin]. PsaA and PsaB bind P700, the primary electron donor of photosystem I (PSI), as well as the electron acceptors A0, A1 and FX. PSI is a plastocyanin/cytochrome c6-ferredoxin oxidoreductase, converting photonic excitation into a charge separation, which transfers an electron from the donor P700 chlorophyll pair to the spectroscopically characterized acceptors A0, A1, FX, FA and FB in turn. Oxidized P700 is reduced on the lumenal side of the thylakoid membrane by plastocyanin or cytochrome c6. In Trieres chinensis (Marine centric diatom), this protein is Photosystem I P700 chlorophyll a apoprotein A2.